Here is a 905-residue protein sequence, read N- to C-terminus: Chitin synthase 3B (905 aa).

Over residues 1–10 the composition is skewed to basic and acidic residues; that stretch reads MAYNGRDQEY. A disordered region spans residues 1–136; that stretch reads MAYNGRDQEY…GGGGGLGRSK (136 aa). The segment covering 81–93 has biased composition (gly residues); that stretch reads GPTGYGDTGGSFG. A glycan (N-linked (GlcNAc...) asparagine) is linked at Asn536. A helical transmembrane segment spans residues 562–584; the sequence is MFFLHIQLIYTTLNTMFAWFSLG. A glycan (N-linked (GlcNAc...) asparagine) is linked at Asn601. Transmembrane regions (helical) follow at residues 618 to 638, 653 to 673, 705 to 725, 733 to 753, 832 to 852, and 873 to 893; these read IVNA…FILA, SFMV…YLVV, VILV…FMYL, SFPY…VYAF, TGLV…ITST, and FLLY…LWFL.

Belongs to the chitin synthase family. Class III subfamily.

The protein resides in the cell membrane. The enzyme catalyses [(1-&gt;4)-N-acetyl-beta-D-glucosaminyl](n) + UDP-N-acetyl-alpha-D-glucosamine = [(1-&gt;4)-N-acetyl-beta-D-glucosaminyl](n+1) + UDP + H(+). Polymerizes chitin, a structural polymer of the cell wall and septum, by transferring the sugar moiety of UDP-GlcNAc to the non-reducing end of the growing chitin polymer. Plays essential functions in fungal survival and host infection. This Gibberella zeae (strain ATCC MYA-4620 / CBS 123657 / FGSC 9075 / NRRL 31084 / PH-1) (Wheat head blight fungus) protein is Chitin synthase 3B.